Here is a 470-residue protein sequence, read N- to C-terminus: Glucose-1-phosphate adenylyltransferase large subunit 1 (470 aa).

Belongs to the bacterial/plant glucose-1-phosphate adenylyltransferase family. Heterotetramer. In terms of tissue distribution, prominently expressed in the leaves and a weaker expression is seen in the tubers.

It localises to the plastid. Its subcellular location is the chloroplast. The protein resides in the amyloplast. It catalyses the reaction alpha-D-glucose 1-phosphate + ATP + H(+) = ADP-alpha-D-glucose + diphosphate. It functions in the pathway glycan biosynthesis; starch biosynthesis. Its activity is regulated as follows. Activated by 3'phosphoglycerate, inhibited by orthophosphate. Allosteric regulation. Its function is as follows. This protein plays a role in synthesis of starch. It catalyzes the synthesis of the activated glycosyl donor, ADP-glucose from Glc-1-P and ATP. The protein is Glucose-1-phosphate adenylyltransferase large subunit 1 (AGPS1) of Solanum tuberosum (Potato).